We begin with the raw amino-acid sequence, 409 residues long: Lactadherin (409 aa).

2 EGF-like domains span residues 2-41 (SGDF…LICN) and 44-88 (EKGP…IHCE). Cystine bridges form between cysteine 6–cysteine 17, cysteine 11–cysteine 29, and cysteine 31–cysteine 40. Residue asparagine 41 is glycosylated (N-linked (GlcNAc...) asparagine). 6 disulfides stabilise this stretch: cysteine 48-cysteine 59, cysteine 53-cysteine 76, cysteine 78-cysteine 87, cysteine 91-cysteine 247, cysteine 234-cysteine 238, and cysteine 252-cysteine 409. The Cell attachment site signature appears at 67–69 (RGD). F5/8 type C domains lie at 91–247 (CNAP…LLGC) and 252–409 (CAEP…LLGC). N-linked (GlcNAc...) asparagine glycosylation is present at asparagine 372.

As to expression, mammary epithelial cell surfaces and spermatozoan. Also present in testis, epididymis, uterus, adrenal gland, tonsil, muscle, heart, lymphatic gland, thymus and kidney but not spleen, liver, lung or brain.

Its subcellular location is the membrane. The protein resides in the secreted. The protein localises to the cytoplasmic vesicle. It localises to the secretory vesicle. It is found in the acrosome membrane. Its function is as follows. Contributes to phagocytic removal of apoptotic cells in many tissues. Plays an important role in the maintenance of intestinal epithelial homeostasis and the promotion of mucosal healing. Promotes VEGF-dependent neovascularization. Specific ligand for the alpha-v/beta-3 and alpha-v/beta-5 receptors. Also binds to phosphatidylserine-enriched cell surfaces in a receptor-independent manner. Zona pellucida-binding protein which may play a role in gamete interaction. This Sus scrofa (Pig) protein is Lactadherin (MFGE8).